The sequence spans 218 residues: UPF0126 membrane protein SCO4104 (218 aa).

The next 7 helical transmembrane spans lie at 8–28 (LLALDLTGTFAFGLNGALTAV), 37–57 (GVVVLGMITALGGGVIRDVLI), 64–84 (AFLDWRYYTLAAAGGLLAFAV), 91–111 (LEPAITVLDAVGLSTFAVIGA), 118–138 (GLAVVPAMLLGVITAVGGGTI), 154–174 (LYAIPALAGAAVTVATTETGV), and 179–199 (AALGAAAVCFLIRMLGLHFGI).

The protein belongs to the UPF0126 family.

The protein localises to the cell membrane. This chain is UPF0126 membrane protein SCO4104, found in Streptomyces coelicolor (strain ATCC BAA-471 / A3(2) / M145).